We begin with the raw amino-acid sequence, 174 residues long: Co-chaperone protein HscB (174 aa).

In terms of domain architecture, J spans 2–74 (NYFALFDLPR…LNRAIYFLCL (73 aa)).

Belongs to the HscB family. In terms of assembly, interacts with HscA and stimulates its ATPase activity. Interacts with IscU.

In terms of biological role, co-chaperone involved in the maturation of iron-sulfur cluster-containing proteins. Seems to help targeting proteins to be folded toward HscA. This Buchnera aphidicola subsp. Acyrthosiphon pisum (strain 5A) protein is Co-chaperone protein HscB.